The chain runs to 61 residues: Large ribosomal subunit protein uL29 (61 aa).

Belongs to the universal ribosomal protein uL29 family.

The protein is Large ribosomal subunit protein uL29 of Campylobacter jejuni subsp. jejuni serotype O:6 (strain 81116 / NCTC 11828).